The primary structure comprises 544 residues: POTE ankyrin domain family member B2 (544 aa).

5 ANK repeats span residues 135–167, 168–200, 201–233, 234–266, and 267–299; these read QKRT…VLDN, KKRT…IQDE, YGNT…SKNK, CGLT…ALDR, and YGRT…SQDL. The disordered stretch occupies residues 332–457; sequence SSENSNPEQD…NTGISQDEIL (126 aa). Composition is skewed to basic and acidic residues over residues 340-355 and 364-375; these read QDLK…RLKV and MSQEPEINKDCD. Residues 439–457 show a composition bias toward polar residues; that stretch reads TQKQLSEEQNTGISQDEIL.

The protein belongs to the POTE family.

This Homo sapiens (Human) protein is POTE ankyrin domain family member B2 (POTEB2).